The following is a 329-amino-acid chain: DNA-directed RNA polymerase subunit alpha (329 aa).

The interval 1-234 (MQGSVTEFLK…EQLDAFVELR (234 aa)) is alpha N-terminal domain (alpha-NTD). An alpha C-terminal domain (alpha-CTD) region spans residues 248–329 (FDPILLRPVD…WPPASLVDDL (82 aa)).

Belongs to the RNA polymerase alpha chain family. As to quaternary structure, homodimer. The RNAP catalytic core consists of 2 alpha, 1 beta, 1 beta' and 1 omega subunit. When a sigma factor is associated with the core the holoenzyme is formed, which can initiate transcription.

The enzyme catalyses RNA(n) + a ribonucleoside 5'-triphosphate = RNA(n+1) + diphosphate. DNA-dependent RNA polymerase catalyzes the transcription of DNA into RNA using the four ribonucleoside triphosphates as substrates. This chain is DNA-directed RNA polymerase subunit alpha, found in Shewanella denitrificans (strain OS217 / ATCC BAA-1090 / DSM 15013).